A 174-amino-acid chain; its full sequence is DTLLDTDGEVVRNNGGPYYIIPAFRGNGGGLTLTRVGSETCPRTVVQASSEHSDGLPVVISALPRSLFISTSWRVTIQFVEATCIPKPSFWHIPQDSELEGAVKVGASDERFPLEFRIERVSEDTYKLMHCSSTSDSCRDLGISIDEEGNRRLVVRDENPLLVRFKKANQDSEK.

2 disulfide bridges follow: cysteine 41-cysteine 84 and cysteine 131-cysteine 138.

It belongs to the protease inhibitor I3 (leguminous Kunitz-type inhibitor) family.

It localises to the secreted. Inhibits bovine trypsin and chymotrypsin, and human plasmin, plasma kallikrein and factor XIIa. This chain is Trypsin inhibitor BvTI, found in Bauhinia variegata (Purple orchid tree).